The primary structure comprises 383 residues: Insulinoma-associated protein 1a (383 aa).

Positions 1 to 20 (MPRGFLVKRNKKATPVSYRV) are SNAG domain. Disordered regions lie at residues 99-141 (PVDL…AMRK) and 229-269 (RWHK…SEDG). The span at 105-120 (GTSNSNRTGTTVTTKR) shows a compositional bias: polar residues. Basic residues predominate over residues 130–140 (KPASKKAKAMR). The segment at 209–231 (YRCPECDKLFSCPANLASHRRWH) adopts a C2H2-type 1 zinc-finger fold. Over residues 244-256 (APEKEETSSDRDT) the composition is skewed to basic and acidic residues. A C2H2-type 2; degenerate zinc finger spans residues 271 to 295 (YDCQHCGKKFKRQAYLKKHVTAHHD). C2H2-type zinc fingers lie at residues 314-337 (HLCPVCGENFPSRMSQERHIRLQH) and 342-365 (YPCKYCPAMFYSSPGLTRHINKCH).

It belongs to the INSM1 family.

It is found in the nucleus. Its function is as follows. May act as a transcriptional regulator. May play a role in neurogenesis and neuroendocrine cell differentiation during embryonic development. The sequence is that of Insulinoma-associated protein 1a (insm1a) from Danio rerio (Zebrafish).